Reading from the N-terminus, the 321-residue chain is Ribose-phosphate pyrophosphokinase (321 aa).

ATP-binding positions include 39–41 (DGE) and 98–99 (RQ). The Mg(2+) site is built by H132 and D170. The active site involves K195. D-ribose 5-phosphate-binding positions include R197, D221, and 225-229 (DTGGT).

Belongs to the ribose-phosphate pyrophosphokinase family. Class I subfamily. As to quaternary structure, homohexamer. Mg(2+) is required as a cofactor.

The protein localises to the cytoplasm. It carries out the reaction D-ribose 5-phosphate + ATP = 5-phospho-alpha-D-ribose 1-diphosphate + AMP + H(+). The protein operates within metabolic intermediate biosynthesis; 5-phospho-alpha-D-ribose 1-diphosphate biosynthesis; 5-phospho-alpha-D-ribose 1-diphosphate from D-ribose 5-phosphate (route I): step 1/1. In terms of biological role, involved in the biosynthesis of the central metabolite phospho-alpha-D-ribosyl-1-pyrophosphate (PRPP) via the transfer of pyrophosphoryl group from ATP to 1-hydroxyl of ribose-5-phosphate (Rib-5-P). The protein is Ribose-phosphate pyrophosphokinase of Mycoplasmopsis pulmonis (strain UAB CTIP) (Mycoplasma pulmonis).